Reading from the N-terminus, the 343-residue chain is Heat-inducible transcription repressor HrcA (343 aa).

This sequence belongs to the HrcA family.

Its function is as follows. Negative regulator of class I heat shock genes (grpE-dnaK-dnaJ and groELS operons). Prevents heat-shock induction of these operons. The chain is Heat-inducible transcription repressor HrcA from Thermobifida fusca (strain YX).